The sequence spans 255 residues: Thiazole synthase (255 aa).

Lys-96 (schiff-base intermediate with DXP) is an active-site residue. Residues Gly-157, 183–184 (AG), and 205–206 (NT) contribute to the 1-deoxy-D-xylulose 5-phosphate site.

The protein belongs to the ThiG family. In terms of assembly, homotetramer. Forms heterodimers with either ThiH or ThiS.

It localises to the cytoplasm. It catalyses the reaction [ThiS sulfur-carrier protein]-C-terminal-Gly-aminoethanethioate + 2-iminoacetate + 1-deoxy-D-xylulose 5-phosphate = [ThiS sulfur-carrier protein]-C-terminal Gly-Gly + 2-[(2R,5Z)-2-carboxy-4-methylthiazol-5(2H)-ylidene]ethyl phosphate + 2 H2O + H(+). It functions in the pathway cofactor biosynthesis; thiamine diphosphate biosynthesis. Catalyzes the rearrangement of 1-deoxy-D-xylulose 5-phosphate (DXP) to produce the thiazole phosphate moiety of thiamine. Sulfur is provided by the thiocarboxylate moiety of the carrier protein ThiS. In vitro, sulfur can be provided by H(2)S. The polypeptide is Thiazole synthase (Staphylococcus epidermidis (strain ATCC 12228 / FDA PCI 1200)).